Reading from the N-terminus, the 380-residue chain is Cytochrome b (380 aa).

Helical transmembrane passes span 34–54 (YGSL…FLAM), 78–99 (WLMR…YLHI), 114–134 (WNIG…GYVL), and 179–199 (FFTF…LHLL). Positions 84 and 98 each coordinate heme b. Heme b contacts are provided by His183 and His197. His202 is a binding site for a ubiquinone. The next 4 helical transmembrane spans lie at 227-247 (YKDT…STTN), 289-309 (LGGV…PSLH), 321-341 (LSQL…WIGG), and 348-368 (FILI…VLLP).

It belongs to the cytochrome b family. The cytochrome bc1 complex contains 3 respiratory subunits (MT-CYB, CYC1 and UQCRFS1), 2 core proteins (UQCRC1 and UQCRC2) and probably 6 low-molecular weight proteins. Heme b serves as cofactor.

The protein resides in the mitochondrion inner membrane. Component of the ubiquinol-cytochrome c reductase complex (complex III or cytochrome b-c1 complex) that is part of the mitochondrial respiratory chain. The b-c1 complex mediates electron transfer from ubiquinol to cytochrome c. Contributes to the generation of a proton gradient across the mitochondrial membrane that is then used for ATP synthesis. The chain is Cytochrome b (mt-cyb) from Typhlonectes natans (Rubber eel).